The primary structure comprises 250 residues: 5'-nucleotidase SurE (250 aa).

4 residues coordinate a divalent metal cation: Asp-8, Asp-9, Ser-40, and Asn-94.

This sequence belongs to the SurE nucleotidase family. A divalent metal cation is required as a cofactor.

The protein resides in the cytoplasm. It catalyses the reaction a ribonucleoside 5'-phosphate + H2O = a ribonucleoside + phosphate. Functionally, nucleotidase that shows phosphatase activity on nucleoside 5'-monophosphates. This Wolbachia pipientis wMel protein is 5'-nucleotidase SurE.